Here is a 490-residue protein sequence, read N- to C-terminus: Aspartyl/glutamyl-tRNA(Asn/Gln) amidotransferase subunit B (490 aa).

It belongs to the GatB/GatE family. GatB subfamily. In terms of assembly, heterotrimer of A, B and C subunits.

The catalysed reaction is L-glutamyl-tRNA(Gln) + L-glutamine + ATP + H2O = L-glutaminyl-tRNA(Gln) + L-glutamate + ADP + phosphate + H(+). It catalyses the reaction L-aspartyl-tRNA(Asn) + L-glutamine + ATP + H2O = L-asparaginyl-tRNA(Asn) + L-glutamate + ADP + phosphate + 2 H(+). In terms of biological role, allows the formation of correctly charged Asn-tRNA(Asn) or Gln-tRNA(Gln) through the transamidation of misacylated Asp-tRNA(Asn) or Glu-tRNA(Gln) in organisms which lack either or both of asparaginyl-tRNA or glutaminyl-tRNA synthetases. The reaction takes place in the presence of glutamine and ATP through an activated phospho-Asp-tRNA(Asn) or phospho-Glu-tRNA(Gln). The chain is Aspartyl/glutamyl-tRNA(Asn/Gln) amidotransferase subunit B from Methylobacterium nodulans (strain LMG 21967 / CNCM I-2342 / ORS 2060).